The following is a 600-amino-acid chain: Copine-A (600 aa).

C2 domains are found at residues 1-111 (MNLK…TVCL) and 116-246 (KSGK…NVIN). The Ca(2+) site is built by Asp-23, Asp-29, Asp-82, Asp-84, Asp-89, Asp-151, Asp-158, Asp-215, Asp-217, and Asp-223. The VWFA domain maps to 286 to 503 (NLIVGIDCTA…ELAAEVLREI (218 aa)). Low complexity predominate over residues 535 to 549 (YDNPTTTTTATSPST). A disordered region spans residues 535-583 (YDNPTTTTTATSPSTGIDLNKGSNVGLNLTKTESSPSPSGGAGIDLNKG). Polar residues predominate over residues 555–572 (KGSNVGLNLTKTESSPSP).

The protein belongs to the copine family. It depends on Ca(2+) as a cofactor.

The protein localises to the cytoplasm. It localises to the membrane. Functionally, required for cytokinesis, contractile vacuole function and development. This is Copine-A (cpnA) from Dictyostelium discoideum (Social amoeba).